Consider the following 428-residue polypeptide: MLDPKFLRNELEVTAERLATRGFILDIAHLTQLEEKRKSLQVATEELQASRNAISKSIGQAKARGEDVDAIMAQVGDLGSQLDAKKIELAAVLEEVNAIAMSMPNLPDESAPIGADETENVEVRRWGTPRTFDFPIKDHIDLGEGLNGLDFKNAVKITGSRFIVMKGQVARLNRAIGQFMLDLHTTEHGYTEAYVPLLVNEASLLGTGQLPKFGEDLFHTKPATEEGQGLSLIPTAEVPLTNLVRDSIVDEDELPIKLTAHTACFRSEAGSYGKDTRGLIRQHQFDKVEMVQIVKPEDSMAALEALTGHAETVLQRLGLPYRTVILCTGDMGFGSSKTYDIEVWLPAQNTYREISSCSNMKDFQARRMQARYRVKADNKPALLHTLNGSGLAVGRTLVAILENYQNADGSITIPEVLRPYMGGLTKIG.

Residue 235–237 participates in L-serine binding; sequence TAE. Position 266–268 (266–268) interacts with ATP; that stretch reads RSE. Position 289 (glutamate 289) interacts with L-serine. 353–356 contributes to the ATP binding site; the sequence is EISS. Serine 389 serves as a coordination point for L-serine.

This sequence belongs to the class-II aminoacyl-tRNA synthetase family. Type-1 seryl-tRNA synthetase subfamily. Homodimer. The tRNA molecule binds across the dimer.

It localises to the cytoplasm. The enzyme catalyses tRNA(Ser) + L-serine + ATP = L-seryl-tRNA(Ser) + AMP + diphosphate + H(+). It catalyses the reaction tRNA(Sec) + L-serine + ATP = L-seryl-tRNA(Sec) + AMP + diphosphate + H(+). It functions in the pathway aminoacyl-tRNA biosynthesis; selenocysteinyl-tRNA(Sec) biosynthesis; L-seryl-tRNA(Sec) from L-serine and tRNA(Sec): step 1/1. Functionally, catalyzes the attachment of serine to tRNA(Ser). Is also able to aminoacylate tRNA(Sec) with serine, to form the misacylated tRNA L-seryl-tRNA(Sec), which will be further converted into selenocysteinyl-tRNA(Sec). The chain is Serine--tRNA ligase from Shewanella baltica (strain OS155 / ATCC BAA-1091).